The primary structure comprises 618 residues: uncharacterized protein (618 aa).

The interval M1–V45 is disordered. Composition is skewed to basic and acidic residues over residues K14–K27 and N36–V45. Phosphoserine occurs at positions 50 and 53. T54 bears the Phosphothreonine mark. S55 and S64 each carry phosphoserine. 2 ABC transporter domains span residues I76 to Q325 and I388 to D609. ATP is bound by residues G108 to S115 and G423 to S430.

Belongs to the ABC transporter superfamily.

The protein localises to the cytoplasm. This is an uncharacterized protein from Schizosaccharomyces pombe (strain 972 / ATCC 24843) (Fission yeast).